The chain runs to 326 residues: Probable fructokinase-4 (326 aa).

The protein belongs to the carbohydrate kinase PfkB family.

The catalysed reaction is D-fructose + ATP = D-fructose 6-phosphate + ADP + H(+). The protein operates within glycan biosynthesis; starch biosynthesis. Functionally, may play an important role in maintaining the flux of carbon towards starch formation. In Arabidopsis thaliana (Mouse-ear cress), this protein is Probable fructokinase-4.